Consider the following 305-residue polypeptide: tRNA dimethylallyltransferase (305 aa).

8-15 (GPTAVGKT) provides a ligand contact to ATP. 10-15 (TAVGKT) is a substrate binding site. Positions 33–36 (DSRQ) are interaction with substrate tRNA.

Belongs to the IPP transferase family. As to quaternary structure, monomer. It depends on Mg(2+) as a cofactor.

The enzyme catalyses adenosine(37) in tRNA + dimethylallyl diphosphate = N(6)-dimethylallyladenosine(37) in tRNA + diphosphate. Functionally, catalyzes the transfer of a dimethylallyl group onto the adenine at position 37 in tRNAs that read codons beginning with uridine, leading to the formation of N6-(dimethylallyl)adenosine (i(6)A). The chain is tRNA dimethylallyltransferase from Thermotoga neapolitana (strain ATCC 49049 / DSM 4359 / NBRC 107923 / NS-E).